Reading from the N-terminus, the 375-residue chain is N5-carboxyaminoimidazole ribonucleotide synthase (375 aa).

Residues Arg108, Lys148, 153–159 (GYDGKGQ), 183–186 (EQYL), Glu191, His214, and 266–267 (NE) each bind ATP. The ATP-grasp domain occupies 112–296 (KQTLLEANTQ…QFDTHILAIT (185 aa)).

It belongs to the PurK/PurT family. Homodimer.

It catalyses the reaction 5-amino-1-(5-phospho-beta-D-ribosyl)imidazole + hydrogencarbonate + ATP = 5-carboxyamino-1-(5-phospho-D-ribosyl)imidazole + ADP + phosphate + 2 H(+). The protein operates within purine metabolism; IMP biosynthesis via de novo pathway; 5-amino-1-(5-phospho-D-ribosyl)imidazole-4-carboxylate from 5-amino-1-(5-phospho-D-ribosyl)imidazole (N5-CAIR route): step 1/2. In terms of biological role, catalyzes the ATP-dependent conversion of 5-aminoimidazole ribonucleotide (AIR) and HCO(3)(-) to N5-carboxyaminoimidazole ribonucleotide (N5-CAIR). The polypeptide is N5-carboxyaminoimidazole ribonucleotide synthase (Staphylococcus epidermidis (strain ATCC 12228 / FDA PCI 1200)).